A 286-amino-acid chain; its full sequence is Bifunctional protein FolD (286 aa).

NADP(+) contacts are provided by residues 166-168 (GAS) and isoleucine 232.

This sequence belongs to the tetrahydrofolate dehydrogenase/cyclohydrolase family. Homodimer.

The enzyme catalyses (6R)-5,10-methylene-5,6,7,8-tetrahydrofolate + NADP(+) = (6R)-5,10-methenyltetrahydrofolate + NADPH. The catalysed reaction is (6R)-5,10-methenyltetrahydrofolate + H2O = (6R)-10-formyltetrahydrofolate + H(+). The protein operates within one-carbon metabolism; tetrahydrofolate interconversion. Its function is as follows. Catalyzes the oxidation of 5,10-methylenetetrahydrofolate to 5,10-methenyltetrahydrofolate and then the hydrolysis of 5,10-methenyltetrahydrofolate to 10-formyltetrahydrofolate. The protein is Bifunctional protein FolD of Blochmanniella pennsylvanica (strain BPEN).